The primary structure comprises 72 residues: Translation initiation factor IF-1 (72 aa).

The S1-like domain occupies 1–72 (MIKEDNIEMH…SKGRIIFRSR (72 aa)).

Belongs to the IF-1 family. In terms of assembly, component of the 30S ribosomal translation pre-initiation complex which assembles on the 30S ribosome in the order IF-2 and IF-3, IF-1 and N-formylmethionyl-tRNA(fMet); mRNA recruitment can occur at any time during PIC assembly.

The protein localises to the cytoplasm. Its function is as follows. One of the essential components for the initiation of protein synthesis. Stabilizes the binding of IF-2 and IF-3 on the 30S subunit to which N-formylmethionyl-tRNA(fMet) subsequently binds. Helps modulate mRNA selection, yielding the 30S pre-initiation complex (PIC). Upon addition of the 50S ribosomal subunit IF-1, IF-2 and IF-3 are released leaving the mature 70S translation initiation complex. This Blochmanniella floridana protein is Translation initiation factor IF-1.